Consider the following 160-residue polypeptide: Cytochrome b6-f complex subunit 4 (160 aa).

The next 3 membrane-spanning stretches (helical) occupy residues 36 to 56 (LLYI…GLAV), 95 to 115 (LLGV…PFLE), and 131 to 151 (TVFL…TLPI).

Belongs to the cytochrome b family. PetD subfamily. In terms of assembly, the 4 large subunits of the cytochrome b6-f complex are cytochrome b6, subunit IV (17 kDa polypeptide, petD), cytochrome f and the Rieske protein, while the 4 small subunits are petG, petL, petM and petN. The complex functions as a dimer.

It is found in the plastid. Its subcellular location is the chloroplast thylakoid membrane. Component of the cytochrome b6-f complex, which mediates electron transfer between photosystem II (PSII) and photosystem I (PSI), cyclic electron flow around PSI, and state transitions. This Coffea arabica (Arabian coffee) protein is Cytochrome b6-f complex subunit 4.